A 96-amino-acid chain; its full sequence is uncharacterized protein (96 aa).

This is an uncharacterized protein from Saimiriine herpesvirus 2 (strain 11) (SaHV-2).